The sequence spans 344 residues: tRNA N6-adenosine threonylcarbamoyltransferase (344 aa).

Residues H110 and H114 each coordinate Fe cation. Substrate contacts are provided by residues 133–137 (VVSGA), D166, G179, and N278. D303 is a Fe cation binding site.

Belongs to the KAE1 / TsaD family. Fe(2+) serves as cofactor.

The protein localises to the cytoplasm. The catalysed reaction is L-threonylcarbamoyladenylate + adenosine(37) in tRNA = N(6)-L-threonylcarbamoyladenosine(37) in tRNA + AMP + H(+). Its function is as follows. Required for the formation of a threonylcarbamoyl group on adenosine at position 37 (t(6)A37) in tRNAs that read codons beginning with adenine. Is involved in the transfer of the threonylcarbamoyl moiety of threonylcarbamoyl-AMP (TC-AMP) to the N6 group of A37, together with TsaE and TsaB. TsaD likely plays a direct catalytic role in this reaction. This chain is tRNA N6-adenosine threonylcarbamoyltransferase, found in Chlamydia abortus (strain DSM 27085 / S26/3) (Chlamydophila abortus).